Reading from the N-terminus, the 336-residue chain is 3-isopropylmalate dehydrogenase (336 aa).

4 residues coordinate substrate: R87, R97, R121, and D211. 3 residues coordinate Mg(2+): D211, D235, and D239. 271–283 (GSAPDIAGQGIAD) lines the NAD(+) pocket.

It belongs to the isocitrate and isopropylmalate dehydrogenases family. LeuB type 2 subfamily. Homodimer. Mg(2+) is required as a cofactor. Mn(2+) serves as cofactor.

The protein resides in the cytoplasm. The enzyme catalyses (2R,3S)-3-isopropylmalate + NAD(+) = 4-methyl-2-oxopentanoate + CO2 + NADH. It participates in amino-acid biosynthesis; L-leucine biosynthesis; L-leucine from 3-methyl-2-oxobutanoate: step 3/4. Catalyzes the oxidation of 3-carboxy-2-hydroxy-4-methylpentanoate (3-isopropylmalate) to 3-carboxy-4-methyl-2-oxopentanoate. The product decarboxylates to 4-methyl-2 oxopentanoate. This Mycolicibacterium paratuberculosis (strain ATCC BAA-968 / K-10) (Mycobacterium paratuberculosis) protein is 3-isopropylmalate dehydrogenase.